The sequence spans 684 residues: Acetophenone carboxylase delta subunit (684 aa).

Belongs to the oxoprolinase family. Acetophenone carboxylase consists of five subunits; a heterooctameric subcomplex of two alpha (Apc1), two beta (Apc2), two gamma (Apc3) and two delta (Apc4) subunits assembles with the epsilon (Apc5) subunit in an unknown stoichiometry. Requires Mg(2+) as cofactor. It depends on Mn(2+) as a cofactor.

It localises to the cytoplasm. It carries out the reaction acetophenone + hydrogencarbonate + 2 ATP + H2O = 3-oxo-3-phenylpropanoate + 2 ADP + 2 phosphate + 2 H(+). With respect to regulation, inhibited by zinc ions, carbamoylphosphate and beta,gamma-imido-ATP. In terms of biological role, catalyzes the carboxylation of acetophenone to form 3-oxo-3-phenylpropanoate (benzoylacetate) in the anaerobic catabolism of ethylbenzene. Also carboxylates propiophenone at the same rate and 4-acetyl-pyridine at lower rates. The protein is Acetophenone carboxylase delta subunit (apc4) of Aromatoleum aromaticum (strain DSM 19018 / LMG 30748 / EbN1) (Azoarcus sp. (strain EbN1)).